Here is a 735-residue protein sequence, read N- to C-terminus: Ion-translocating oxidoreductase complex subunit C (735 aa).

4Fe-4S ferredoxin-type domains are found at residues 368-397 (MGAPQEEKSCIRCSACADACPADLLPQQLY) and 407-436 (KATAHHIADCIECGACAWVCPSNIPLVQYF). Residues C377, C380, C383, C387, C416, C419, C422, and C426 each coordinate [4Fe-4S] cluster. Positions 562 to 713 (AIARAKARKQ…AEPADPRKAA (152 aa)) are disordered.

The protein belongs to the 4Fe4S bacterial-type ferredoxin family. RnfC subfamily. In terms of assembly, the complex is composed of six subunits: RsxA, RsxB, RsxC, RsxD, RsxE and RsxG. Requires [4Fe-4S] cluster as cofactor.

It is found in the cell inner membrane. Part of a membrane-bound complex that couples electron transfer with translocation of ions across the membrane. Required to maintain the reduced state of SoxR. This Salmonella newport (strain SL254) protein is Ion-translocating oxidoreductase complex subunit C.